Consider the following 209-residue polypeptide: MSNVDINHARALVYQLLSSLFAREIDEQRLKQLTSEQAQQFWTQLGYAPEFSAPVASIQKVLNDLTSDEALLELAADYCGLFLVGTKYSASPYASLYLSPEEEPLLFGQQHQQMSEFLHQSKLQVQSHFPEPADHLAVILAYMGHLACHSEDAAQLSFLNTCIDSWLAKFVAKVIECDSQHSNGFYSALATLTLAWVQQDKQQLEQAIH.

It belongs to the TorD/DmsD family. TorD subfamily.

The protein resides in the cytoplasm. Involved in the biogenesis of TorA. Acts on TorA before the insertion of the molybdenum cofactor and, as a result, probably favors a conformation of the apoenzyme that is competent for acquiring the cofactor. This chain is Chaperone protein TorD, found in Shewanella sp. (strain MR-4).